The chain runs to 196 residues: Holliday junction branch migration complex subunit RuvA (196 aa).

Residues 1–63 (MINKIYGKVI…ENELKLFGFL (63 aa)) form a domain I region. Positions 64–139 (NSDERETFKS…KLLINNELES (76 aa)) are domain II. Position 139 (S139) is a region of interest, flexible linker. The interval 139-196 (SSLFRFKELEESIVSMGFDRKIVNSKLKEAFNLVEFSNLKDSEKEQFLFKEVLKRMSN) is domain III.

Belongs to the RuvA family. Homotetramer. Forms an RuvA(8)-RuvB(12)-Holliday junction (HJ) complex. HJ DNA is sandwiched between 2 RuvA tetramers; dsDNA enters through RuvA and exits via RuvB. An RuvB hexamer assembles on each DNA strand where it exits the tetramer. Each RuvB hexamer is contacted by two RuvA subunits (via domain III) on 2 adjacent RuvB subunits; this complex drives branch migration. In the full resolvosome a probable DNA-RuvA(4)-RuvB(12)-RuvC(2) complex forms which resolves the HJ.

It is found in the cytoplasm. Functionally, the RuvA-RuvB-RuvC complex processes Holliday junction (HJ) DNA during genetic recombination and DNA repair, while the RuvA-RuvB complex plays an important role in the rescue of blocked DNA replication forks via replication fork reversal (RFR). RuvA specifically binds to HJ cruciform DNA, conferring on it an open structure. The RuvB hexamer acts as an ATP-dependent pump, pulling dsDNA into and through the RuvAB complex. HJ branch migration allows RuvC to scan DNA until it finds its consensus sequence, where it cleaves and resolves the cruciform DNA. The polypeptide is Holliday junction branch migration complex subunit RuvA (Borreliella afzelii (strain PKo) (Borrelia afzelii)).